The following is a 257-amino-acid chain: Tryptophan synthase alpha chain (257 aa).

Catalysis depends on proton acceptor residues Glu-51 and Asp-62.

The protein belongs to the TrpA family. Tetramer of two alpha and two beta chains.

The enzyme catalyses (1S,2R)-1-C-(indol-3-yl)glycerol 3-phosphate + L-serine = D-glyceraldehyde 3-phosphate + L-tryptophan + H2O. It functions in the pathway amino-acid biosynthesis; L-tryptophan biosynthesis; L-tryptophan from chorismate: step 5/5. In terms of biological role, the alpha subunit is responsible for the aldol cleavage of indoleglycerol phosphate to indole and glyceraldehyde 3-phosphate. This Nitratidesulfovibrio vulgaris (strain DP4) (Desulfovibrio vulgaris) protein is Tryptophan synthase alpha chain.